The chain runs to 648 residues: S-M checkpoint control protein rad4 (648 aa).

BRCT domains are found at residues 2 to 92 (GSSK…DDGL) and 96 to 185 (KHFL…YFQL). Positions 242-249 (KRGKKRDR) match the Nuclear localization signal motif. BRCT domains are found at residues 298–384 (NEAK…EHAL) and 392–486 (SLVP…SPWA). Position 592 is a phosphoserine (serine 592). A Nuclear localization signal motif is present at residues 643–648 (RKLRRR).

Interacts with drc1/sld2. Interacts (via BRCT1,2 domains) with crb2; a single rad4 molecule interacts simultaneously with both 'Thr-187' phosphorylation sites in a crb2 dimer.

It is found in the nucleus. Functionally, essential component for DNA replication and also the checkpoint control system which couples S and M phases. May directly or indirectly interact with chromatin proteins to form the complex required for the initiation and/or progression of DNA synthesis. Interacts simultaneously with both 'Thr-187' phosphorylation sites in a crb2 dimer for establishing the DNA checkpoint. This chain is S-M checkpoint control protein rad4 (rad4), found in Schizosaccharomyces pombe (strain 972 / ATCC 24843) (Fission yeast).